A 272-amino-acid polypeptide reads, in one-letter code: EID1-like F-box protein 3 (272 aa).

Residues 29 to 81 (SGKSGIENERVLVLVFESISWDIHTLCTIASLSRRFCAIARRILWRRLCVNRA) form the F-box domain.

The protein is EID1-like F-box protein 3 (EDL3) of Arabidopsis thaliana (Mouse-ear cress).